A 238-amino-acid polypeptide reads, in one-letter code: Tetrahydromethanopterin S-methyltransferase subunit A 1 (238 aa).

Residues 2 to 218 (VEKKSPAEGW…RMFAGMYSGK (217 aa)) are Cytoplasmic-facing. H84 is a 5-hydroxybenzimidazolylcob(I)amide binding site. The chain crosses the membrane as a helical span at residues 219 to 237 (VQGIMIGLAFTLTLGILLL). A topological domain (extracellular) is located at residue V238.

It belongs to the MtrA family. As to quaternary structure, the complex is composed of 8 subunits; MtrA, MtrB, MtrC, MtrD, MtrE, MtrF, MtrG and MtrH. It depends on 5-hydroxybenzimidazolylcob(I)amide as a cofactor.

The protein resides in the cell membrane. It carries out the reaction 5-methyl-5,6,7,8-tetrahydromethanopterin + coenzyme M + 2 Na(+)(in) = 5,6,7,8-tetrahydromethanopterin + methyl-coenzyme M + 2 Na(+)(out). Its pathway is one-carbon metabolism; methanogenesis from CO(2); methyl-coenzyme M from 5,10-methylene-5,6,7,8-tetrahydromethanopterin: step 2/2. Part of a complex that catalyzes the formation of methyl-coenzyme M and tetrahydromethanopterin from coenzyme M and methyl-tetrahydromethanopterin. This is an energy-conserving, sodium-ion translocating step. In Methanothermobacter thermautotrophicus (strain ATCC 29096 / DSM 1053 / JCM 10044 / NBRC 100330 / Delta H) (Methanobacterium thermoautotrophicum), this protein is Tetrahydromethanopterin S-methyltransferase subunit A 1.